We begin with the raw amino-acid sequence, 207 residues long: Dephospho-CoA kinase (207 aa).

In terms of domain architecture, DPCK spans 5-202 (VVGLTGGIGS…LQYLKLSAEK (198 aa)). An ATP-binding site is contributed by 13-18 (GSGKST).

It belongs to the CoaE family.

The protein localises to the cytoplasm. It carries out the reaction 3'-dephospho-CoA + ATP = ADP + CoA + H(+). Its pathway is cofactor biosynthesis; coenzyme A biosynthesis; CoA from (R)-pantothenate: step 5/5. In terms of biological role, catalyzes the phosphorylation of the 3'-hydroxyl group of dephosphocoenzyme A to form coenzyme A. This is Dephospho-CoA kinase from Dechloromonas aromatica (strain RCB).